Consider the following 698-residue polypeptide: Probable Xaa-Pro aminopeptidase P (698 aa).

The Mn(2+) site is built by D509, D520, E604, and E618.

Belongs to the peptidase M24B family. Requires Mn(2+) as cofactor.

The catalysed reaction is Release of any N-terminal amino acid, including proline, that is linked to proline, even from a dipeptide or tripeptide.. In terms of biological role, catalyzes the removal of a penultimate prolyl residue from the N-termini of peptides. This Arthroderma benhamiae (strain ATCC MYA-4681 / CBS 112371) (Trichophyton mentagrophytes) protein is Probable Xaa-Pro aminopeptidase P (AMPP).